The primary structure comprises 446 residues: Probable glycine dehydrogenase (decarboxylating) subunit 1 (446 aa).

Belongs to the GcvP family. N-terminal subunit subfamily. In terms of assembly, the glycine cleavage system is composed of four proteins: P, T, L and H. In this organism, the P 'protein' is a heterodimer of two subunits.

The catalysed reaction is N(6)-[(R)-lipoyl]-L-lysyl-[glycine-cleavage complex H protein] + glycine + H(+) = N(6)-[(R)-S(8)-aminomethyldihydrolipoyl]-L-lysyl-[glycine-cleavage complex H protein] + CO2. In terms of biological role, the glycine cleavage system catalyzes the degradation of glycine. The P protein binds the alpha-amino group of glycine through its pyridoxal phosphate cofactor; CO(2) is released and the remaining methylamine moiety is then transferred to the lipoamide cofactor of the H protein. This is Probable glycine dehydrogenase (decarboxylating) subunit 1 from Protochlamydia amoebophila (strain UWE25).